We begin with the raw amino-acid sequence, 245 residues long: tRNA (guanine-N(7)-)-methyltransferase (245 aa).

Glu-75, Glu-100, Asp-127, and Asp-150 together coordinate S-adenosyl-L-methionine. Asp-150 is a catalytic residue. Substrate contacts are provided by residues Lys-154, Asp-186, and 223–226 (TKFE).

Belongs to the class I-like SAM-binding methyltransferase superfamily. TrmB family.

It carries out the reaction guanosine(46) in tRNA + S-adenosyl-L-methionine = N(7)-methylguanosine(46) in tRNA + S-adenosyl-L-homocysteine. It participates in tRNA modification; N(7)-methylguanine-tRNA biosynthesis. Functionally, catalyzes the formation of N(7)-methylguanine at position 46 (m7G46) in tRNA. This Photobacterium profundum (strain SS9) protein is tRNA (guanine-N(7)-)-methyltransferase.